The primary structure comprises 826 residues: Lon protease (826 aa).

Residues 26-221 (LPMLPVRDVV…AVNGFVSREV (196 aa)) enclose the Lon N-terminal domain. ATP is bound at residue 373 to 380 (GPPGVGKT). The region spanning 609 to 790 (EPQIGLATGL…NEVLEKALLP (182 aa)) is the Lon proteolytic domain. Catalysis depends on residues S696 and K739. The tract at residues 788–826 (LLPAEKKKAPPKKKPPKKAAKPKAKKTQPKAKTTEAADK) is disordered. Positions 796–816 (APPKKKPPKKAAKPKAKKTQP) are enriched in basic residues.

The protein belongs to the peptidase S16 family. Homohexamer. Organized in a ring with a central cavity.

It is found in the cytoplasm. It carries out the reaction Hydrolysis of proteins in presence of ATP.. Functionally, ATP-dependent serine protease that mediates the selective degradation of mutant and abnormal proteins as well as certain short-lived regulatory proteins. Required for cellular homeostasis and for survival from DNA damage and developmental changes induced by stress. Degrades polypeptides processively to yield small peptide fragments that are 5 to 10 amino acids long. Binds to DNA in a double-stranded, site-specific manner. This is Lon protease from Desulfatibacillum aliphaticivorans.